We begin with the raw amino-acid sequence, 760 residues long: Xaa-Pro dipeptidyl-peptidase (760 aa).

Catalysis depends on charge relay system residues Ser349, Asp469, and His499.

This sequence belongs to the peptidase S15 family. As to quaternary structure, homodimer.

It localises to the cytoplasm. The catalysed reaction is Hydrolyzes Xaa-Pro-|- bonds to release unblocked, N-terminal dipeptides from substrates including Ala-Pro-|-p-nitroanilide and (sequentially) Tyr-Pro-|-Phe-Pro-|-Gly-Pro-|-Ile.. Removes N-terminal dipeptides sequentially from polypeptides having unsubstituted N-termini provided that the penultimate residue is proline. The protein is Xaa-Pro dipeptidyl-peptidase of Streptococcus pyogenes serotype M49 (strain NZ131).